Here is an 860-residue protein sequence, read N- to C-terminus: Semaphorin-3aa (860 aa).

An N-terminal signal peptide occupies residues 1 to 17 (MDYLVGIFLLLCGVALP). The Sema domain maps to 31–515 (RLKLSYNEML…SDLGISQMPL (485 aa)). An N-linked (GlcNAc...) asparagine glycan is attached at Asn53. An intrachain disulfide couples Cys104 to Cys115. Asn126 carries an N-linked (GlcNAc...) asparagine glycan. Disulfide bonds link Cys133-Cys142, Cys270-Cys382, Cys294-Cys342, and Cys518-Cys536. The 90-residue stretch at 579–668 (GYSSVEERSV…FIQPLRRINL (90 aa)) folds into the Ig-like C2-type domain. A glycan (N-linked (GlcNAc...) asparagine) is linked at Asn593. Residues Cys652 and Cys717 are joined by a disulfide bond. A disordered region spans residues 725–860 (KKPKGKKAPK…HEQQRPPRSV (136 aa)). Polar residues-rich tracts occupy residues 748-764 (TPQT…QRAQ) and 782-818 (TGLQ…QPNQ). The segment covering 838–860 (QLQENKRGRNRRTHEQQRPPRSV) has biased composition (basic and acidic residues).

This sequence belongs to the semaphorin family.

Its subcellular location is the secreted. Functionally, may influence outgrowth by a variety of growth cones including those of the posterior lateral line ganglion. The chain is Semaphorin-3aa (sema3aa) from Danio rerio (Zebrafish).